A 271-amino-acid chain; its full sequence is ABC transporter I family member 10 (271 aa).

In terms of domain architecture, ABC transporter spans 40–267 (VECRNLCFSV…IKAKQSSYID (228 aa)). 77 to 84 (GPNGCGKS) is a binding site for ATP.

Belongs to the ABC transporter superfamily. ABCI family.

The protein is ABC transporter I family member 10 (ABCI10) of Arabidopsis thaliana (Mouse-ear cress).